A 494-amino-acid polypeptide reads, in one-letter code: 5'-3' exonuclease PLD3 (494 aa).

Residues M1–A37 are Cytoplasmic-facing. Residues V38 to F58 form a helical; Signal-anchor for type II membrane protein membrane-spanning segment. Over P59–F494 the chain is Lumenal. N100 carries an N-linked (GlcNAc...) asparagine glycan. The PLD phosphodiesterase 1 domain occupies T198–S225. Catalysis depends on residues H203, K205, and D210. N-linked (GlcNAc...) asparagine glycosylation is found at N238, N260, N270, N286, and N389. The 27-residue stretch at Y413–Y439 folds into the PLD phosphodiesterase 2 domain. Active-site residues include H418, K420, and D425. N-linked (GlcNAc...) asparagine glycans are attached at residues N434, N451, and N477.

Belongs to the phospholipase D family. Post-translationally, N-glycosylated. Proteolytically processed to a soluble form that is stable within endosomes and lysosomes. During transport through the secretory pathway becomes proteolysed by cysteine proteases, thereby releasing a stable soluble lysosomal lumenal polypeptide, whereas the transmembrane-bound fragment is rapidly degraded. Its transport route to lysosomes involves ubiquitination and the ESCRT complex. In terms of processing, ubiquitinated. Ubiquitination mediates sorting into lysosomes.

The protein localises to the endoplasmic reticulum membrane. It localises to the lysosome lumen. The protein resides in the early endosome membrane. It is found in the late endosome membrane. Its subcellular location is the golgi apparatus membrane. The protein localises to the endosome membrane. The catalysed reaction is Exonucleolytic cleavage in the 5'- to 3'-direction to yield nucleoside 3'-phosphates.. Its function is as follows. 5'-&gt;3' DNA exonuclease which digests single-stranded DNA (ssDNA). Regulates inflammatory cytokine responses via the degradation of nucleic acids, by reducing the concentration of ssDNA able to stimulate TLR9, a nucleotide-sensing receptor in collaboration with PLD4. May be important in myotube formation. Plays a role in lysosomal homeostasis. Involved in the regulation of endosomal protein sorting. The sequence is that of 5'-3' exonuclease PLD3 (pld3) from Xenopus tropicalis (Western clawed frog).